The following is a 394-amino-acid chain: Dimethyladenosine transferase 2, mitochondrial (394 aa).

A mitochondrion-targeting transit peptide spans 1–19 (MWVPGAGIPSRLTLSAFTR). Residues V75, E123, and D149 each contribute to the S-adenosyl-L-methionine site. The interval 326–327 (KR) is DNA-binding.

It belongs to the class I-like SAM-binding methyltransferase superfamily. rRNA adenine N(6)-methyltransferase family. KsgA subfamily. As to quaternary structure, homodimer. Component of the mitochondrial transcription initiation complex, composed at least of TFB2M, TFAM and POLRMT. In this complex TFAM recruits POLRMT to the promoter whereas TFB2M induces structural changes in POLRMT to enable promoter opening and trapping of the DNA non-template strand. Interacts with mitochondrial RNA polymerase POLRMT. Interacts with TFAM.

Its subcellular location is the mitochondrion. The catalysed reaction is adenosine in rRNA + S-adenosyl-L-methionine = N(6)-methyladenosine in rRNA + S-adenosyl-L-homocysteine + H(+). Its function is as follows. S-adenosyl-L-methionine-dependent rRNA methyltransferase which may methylate two specific adjacent adenosines in the loop of a conserved hairpin near the 3'-end of 12S mitochondrial rRNA. Component of the mitochondrial transcription initiation complex, composed at least of TFB2M, TFAM and POLRMT that is required for basal transcription of mitochondrial DNA. In this complex TFAM recruits POLRMT to a specific promoter whereas TFB2M induces structural changes in POLRMT to enable promoter opening and trapping of the DNA non-template strand. Stimulates transcription independently of the methyltransferase activity. In Bos taurus (Bovine), this protein is Dimethyladenosine transferase 2, mitochondrial.